We begin with the raw amino-acid sequence, 459 residues long: Serine--tRNA ligase (459 aa).

254–256 (TAE) serves as a coordination point for L-serine. ATP is bound by residues 285–287 (RKE) and V301. E308 lines the L-serine pocket. Position 372-375 (372-375 (EMVS)) interacts with ATP. T408 lines the L-serine pocket.

This sequence belongs to the class-II aminoacyl-tRNA synthetase family. Type-1 seryl-tRNA synthetase subfamily. Homodimer. The tRNA molecule binds across the dimer.

It is found in the cytoplasm. The enzyme catalyses tRNA(Ser) + L-serine + ATP = L-seryl-tRNA(Ser) + AMP + diphosphate + H(+). The catalysed reaction is tRNA(Sec) + L-serine + ATP = L-seryl-tRNA(Sec) + AMP + diphosphate + H(+). Its pathway is aminoacyl-tRNA biosynthesis; selenocysteinyl-tRNA(Sec) biosynthesis; L-seryl-tRNA(Sec) from L-serine and tRNA(Sec): step 1/1. Its function is as follows. Catalyzes the attachment of serine to tRNA(Ser). Is also able to aminoacylate tRNA(Sec) with serine, to form the misacylated tRNA L-seryl-tRNA(Sec), which will be further converted into selenocysteinyl-tRNA(Sec). The protein is Serine--tRNA ligase of Staphylothermus marinus (strain ATCC 43588 / DSM 3639 / JCM 9404 / F1).